A 223-amino-acid polypeptide reads, in one-letter code: Charged multivesicular body protein 3 (223 aa).

Gly2 carries the N-myristoyl glycine lipid modification. The interval 2-113 (GLFGKTQEKP…LQKSTEVMKA (112 aa)) is intramolecular interaction with C-terminus. A coiled-coil region spans residues 22–54 (KIRKEMRVVDRQIRDIQREEEKVKRSVKDAAKK). Important for autoinhibitory function regions lie at residues 59–64 (VCVVLA) and 168–169 (IL). The stretch at 149–223 (ESMDDQEEME…MQSRLATLRS (75 aa)) forms a coiled coil. Positions 151–221 (MDDQEEMEEA…EAMQSRLATL (71 aa)) are intramolecular interaction with N-terminus. The segment at 151–223 (MDDQEEMEEA…MQSRLATLRS (73 aa)) is interaction with VPS4A. Residue Lys179 forms a Glycyl lysine isopeptide (Lys-Gly) (interchain with G-Cter in ubiquitin) linkage. The interval 180–223 (APSKVTDALPEPEPAGAMAASEGDEEDDEEDLEAMQSRLATLRS) is disordered. Interaction with STAMBP regions lie at residues 196-223 (AMAASEGDEEDDEEDLEAMQSRLATLRS), 204-208 (EEDDE), and 222-223 (RS). Ser200 is subject to Phosphoserine. The short motif at 201 to 212 (EGDEEDDEEDLE) is the MIT-interacting motif element. Acidic residues predominate over residues 201 to 212 (EGDEEDDEEDLE).

Belongs to the SNF7 family. As to quaternary structure, probable core component of the endosomal sorting required for transport complex III (ESCRT-III). ESCRT-III components are thought to multimerize to form a flat lattice on the perimeter membrane of the endosome. Several assembly forms of ESCRT-III may exist that interact and act sequentially. Forms a metastable monomer in solution; its core structure (without part of the putative autoinhibitory C-terminal acidic region) oligomerizes into a flat lattice via two different dimerization interfaces. In vitro, heteromerizes with CHMP2A (but not CHMP4) to form helical tubular structures that expose membrane-interacting sites on the outside whereas VPS4B can associate on the inside of the tubule. May interact with IGFBP7; the relevance of such interaction however remains unclear. Interacts with CHMP2A. Interacts with CHMP4A; the interaction requires the release of CHMP4A autoinhibition. Interacts with VPS4A. Interacts with STAMBP; the interaction appears to relieve the autoinhibition of CHMP3. Interacts with VTA1.

The protein resides in the cytoplasm. It is found in the cytosol. The protein localises to the membrane. Its subcellular location is the endosome. It localises to the late endosome membrane. Its function is as follows. Probable core component of the endosomal sorting required for transport complex III (ESCRT-III) which is involved in multivesicular bodies (MVBs) formation and sorting of endosomal cargo proteins into MVBs. MVBs contain intraluminal vesicles (ILVs) that are generated by invagination and scission from the limiting membrane of the endosome and mostly are delivered to lysosomes enabling degradation of membrane proteins, such as stimulated growth factor receptors, lysosomal enzymes and lipids. The MVB pathway appears to require the sequential function of ESCRT-O, -I,-II and -III complexes. ESCRT-III proteins mostly dissociate from the invaginating membrane before the ILV is released. The ESCRT machinery also functions in topologically equivalent membrane fission events, such as the terminal stages of cytokinesis. ESCRT-III proteins are believed to mediate the necessary vesicle extrusion and/or membrane fission activities, possibly in conjunction with the AAA ATPase VPS4. Selectively binds to phosphatidylinositol 3,5-bisphosphate PtdIns(3,5)P2 and PtdIns(3,4)P2 in preference to other phosphoinositides tested. Involved in late stages of cytokinesis. Plays a role in endosomal sorting/trafficking of EGF receptor. In Rattus norvegicus (Rat), this protein is Charged multivesicular body protein 3 (Chmp3).